Reading from the N-terminus, the 339-residue chain is Basic membrane protein A (339 aa).

The N-terminal stretch at 1-17 (MNKILLLILLESIVFLS) is a signal peptide. C18 carries N-palmitoyl cysteine lipidation. C18 is lipidated: S-diacylglycerol cysteine.

The protein belongs to the BMP lipoprotein family. As to quaternary structure, monomer.

The protein localises to the cell inner membrane. Immunogenic protein. May be part of an ABC-type nucleoside uptake system involved in the purine salvage pathway. In Borreliella burgdorferi (strain ATCC 35210 / DSM 4680 / CIP 102532 / B31) (Borrelia burgdorferi), this protein is Basic membrane protein A (bmpA).